A 185-amino-acid chain; its full sequence is Transcriptional repressor NrdR (185 aa).

The segment at 1–24 (MRCPFCGGPDTQVKDSRPSEDSSA) is disordered. The segment at 3 to 34 (CPFCGGPDTQVKDSRPSEDSSAIRRRRVCPDC) is a zinc-finger region. The segment covering 12-24 (QVKDSRPSEDSSA) has biased composition (basic and acidic residues). The ATP-cone domain maps to 49–139 (LVVLKRSGKR…VYKNFREAQD (91 aa)). Positions 149–185 (ERLEGEGDLPEDGEAAPAPPDEVVAAPRRGRPARKRA) are disordered. Basic residues predominate over residues 176 to 185 (RRGRPARKRA).

The protein belongs to the NrdR family. The cofactor is Zn(2+).

Negatively regulates transcription of bacterial ribonucleotide reductase nrd genes and operons by binding to NrdR-boxes. The protein is Transcriptional repressor NrdR of Methylorubrum extorquens (strain PA1) (Methylobacterium extorquens).